Consider the following 455-residue polypeptide: Na(+)/H(+) antiporter NhaA (455 aa).

The next 11 membrane-spanning stretches (helical) occupy residues 31–51, 83–103, 113–133, 141–161, 170–190, 198–218, 231–251, 309–329, 345–365, 383–403, and 414–434; these read ASGI…NSPW, GLMS…VLIG, FPLI…LLCV, GWGI…ILLG, VFVT…IALF, VSLL…LLGI, IWAA…LLAF, GLQP…NAGV, IGVA…FAWL, IFGA…IASL, and SKIG…VVLW.

This sequence belongs to the NhaA Na(+)/H(+) (TC 2.A.33) antiporter family.

Its subcellular location is the cell inner membrane. The catalysed reaction is Na(+)(in) + 2 H(+)(out) = Na(+)(out) + 2 H(+)(in). Its function is as follows. Na(+)/H(+) antiporter that extrudes sodium in exchange for external protons. The chain is Na(+)/H(+) antiporter NhaA from Koribacter versatilis (strain Ellin345).